We begin with the raw amino-acid sequence, 292 residues long: Bis(5'-nucleosyl)-tetraphosphatase, symmetrical (292 aa).

The protein belongs to the Ap4A hydrolase family.

It catalyses the reaction P(1),P(4)-bis(5'-adenosyl) tetraphosphate + H2O = 2 ADP + 2 H(+). Hydrolyzes diadenosine 5',5'''-P1,P4-tetraphosphate to yield ADP. This is Bis(5'-nucleosyl)-tetraphosphatase, symmetrical from Yersinia enterocolitica serotype O:8 / biotype 1B (strain NCTC 13174 / 8081).